A 215-amino-acid polypeptide reads, in one-letter code: Tricarboxylate transporter ALT9 (215 aa).

Solcar repeat units follow at residues 18-106 (TTVV…LAPM) and 111-197 (CGVS…VVRL). 3 consecutive transmembrane segments (helical) span residues 19-39 (TVVG…VLVL), 112-132 (GVST…YCTM), and 182-202 (VAGA…GFLV).

The protein belongs to the mitochondrial carrier (TC 2.A.29) family.

It is found in the mitochondrion inner membrane. The protein operates within mycotoxin biosynthesis. Functionally, tricarboxylate transporter; part of the gene cluster that mediates the biosynthesis of the host-selective toxins (HSTs) AAL-toxins, sphinganine-analog mycotoxins responsible for Alternaria stem canker on tomato by the tomato pathotype. The biosynthesis starts with the polyketide synthase ALT1-catalyzed C-16 carbon chain assembly from one starter acetyl-CoA unit with malonyl-CoA extender units. ALT1 also selectively transfers methyl groups at the first and the third cycle of chain elongation for AAL toxin. The C-16 polyketide chain is released from the enzyme by a nucleophilic attack of a carbanion, which is derived from R-carbon of glycin by decarboxylation, on the carbonyl carbon of polyketide acyl chain. This step is probably catalyzed by a pyridoxal 5'-phosphate-dependent aminoacyl transferase ALT4. The respective functions of the other enzymes encoded by the cluster have still to be elucidated. The sphingosine N-acyltransferase-like protein ALT7 seems not to act as a resistance/self-tolerance factor against the toxin in the toxin biosynthetic gene cluster, contrary to what is expected. The protein is Tricarboxylate transporter ALT9 of Alternaria alternata (Alternaria rot fungus).